Reading from the N-terminus, the 258-residue chain is Imidazole glycerol phosphate synthase subunit HisF (258 aa).

Active-site residues include aspartate 11 and aspartate 130.

Belongs to the HisA/HisF family. As to quaternary structure, heterodimer of HisH and HisF.

It is found in the cytoplasm. The enzyme catalyses 5-[(5-phospho-1-deoxy-D-ribulos-1-ylimino)methylamino]-1-(5-phospho-beta-D-ribosyl)imidazole-4-carboxamide + L-glutamine = D-erythro-1-(imidazol-4-yl)glycerol 3-phosphate + 5-amino-1-(5-phospho-beta-D-ribosyl)imidazole-4-carboxamide + L-glutamate + H(+). The protein operates within amino-acid biosynthesis; L-histidine biosynthesis; L-histidine from 5-phospho-alpha-D-ribose 1-diphosphate: step 5/9. Functionally, IGPS catalyzes the conversion of PRFAR and glutamine to IGP, AICAR and glutamate. The HisF subunit catalyzes the cyclization activity that produces IGP and AICAR from PRFAR using the ammonia provided by the HisH subunit. The protein is Imidazole glycerol phosphate synthase subunit HisF of Citrobacter koseri (strain ATCC BAA-895 / CDC 4225-83 / SGSC4696).